Consider the following 516-residue polypeptide: uncharacterized protein (516 aa).

An N-terminal signal peptide occupies residues 1–22 (MLYRFWKTGLAIFMPGCILLSS). Cys-23 carries N-palmitoyl cysteine lipidation. The S-diacylglycerol cysteine moiety is linked to residue Cys-23.

This sequence belongs to the MG067/MG068/MG395 family.

The protein resides in the cell membrane. This is an uncharacterized protein from Mycoplasma genitalium (strain ATCC 33530 / DSM 19775 / NCTC 10195 / G37) (Mycoplasmoides genitalium).